The chain runs to 377 residues: Succinyl-diaminopimelate desuccinylase (377 aa).

Residue histidine 68 participates in Zn(2+) binding. The active site involves aspartate 70. Residue aspartate 101 participates in Zn(2+) binding. Glutamate 135 (proton acceptor) is an active-site residue. Positions 136, 164, and 350 each coordinate Zn(2+).

The protein belongs to the peptidase M20A family. DapE subfamily. As to quaternary structure, homodimer. Zn(2+) is required as a cofactor. The cofactor is Co(2+).

It catalyses the reaction N-succinyl-(2S,6S)-2,6-diaminopimelate + H2O = (2S,6S)-2,6-diaminopimelate + succinate. It functions in the pathway amino-acid biosynthesis; L-lysine biosynthesis via DAP pathway; LL-2,6-diaminopimelate from (S)-tetrahydrodipicolinate (succinylase route): step 3/3. In terms of biological role, catalyzes the hydrolysis of N-succinyl-L,L-diaminopimelic acid (SDAP), forming succinate and LL-2,6-diaminopimelate (DAP), an intermediate involved in the bacterial biosynthesis of lysine and meso-diaminopimelic acid, an essential component of bacterial cell walls. The chain is Succinyl-diaminopimelate desuccinylase from Acinetobacter baumannii (strain SDF).